Consider the following 922-residue polypeptide: Isoleucine--tRNA ligase (922 aa).

The 'HIGH' region motif lies at 57–67 (PYANGDIHLGH). Glu-553 is an L-isoleucyl-5'-AMP binding site. The 'KMSKS' region signature appears at 594-598 (KMSKS). Lys-597 is an ATP binding site. Zn(2+) is bound by residues Cys-892, Cys-895, Cys-912, and Cys-915.

It belongs to the class-I aminoacyl-tRNA synthetase family. IleS type 1 subfamily. As to quaternary structure, monomer. Requires Zn(2+) as cofactor.

It is found in the cytoplasm. It carries out the reaction tRNA(Ile) + L-isoleucine + ATP = L-isoleucyl-tRNA(Ile) + AMP + diphosphate. Its function is as follows. Catalyzes the attachment of isoleucine to tRNA(Ile). As IleRS can inadvertently accommodate and process structurally similar amino acids such as valine, to avoid such errors it has two additional distinct tRNA(Ile)-dependent editing activities. One activity is designated as 'pretransfer' editing and involves the hydrolysis of activated Val-AMP. The other activity is designated 'posttransfer' editing and involves deacylation of mischarged Val-tRNA(Ile). This chain is Isoleucine--tRNA ligase, found in Desulfitobacterium hafniense (strain DSM 10664 / DCB-2).